A 1101-amino-acid chain; its full sequence is Lysylphosphatidylglycerol biosynthesis bifunctional protein LysX (1101 aa).

The tract at residues 1–601 is phosphatidylglycerol lysyltransferase; it reads MTATRLVRAH…RLHSDGTAPD (601 aa). Transmembrane regions (helical) follow at residues 18–38, 60–80, 84–104, 113–133, 151–171, 183–200, and 207–227; these read VPAA…LASV, FPDT…ALAA, IAWW…VTGL, DVGE…LLLA, VTLV…LELF, YALN…GAFS, and VNAL…VVLF. The lysine--tRNA ligase stretch occupies residues 602–1101; it reads RIGPVGDGAD…TLPFPLAKPR (500 aa). Residues 662–740 constitute a DNA-binding region (OB); sequence VTVSGRVLRA…SVLVTRWRLI (79 aa). Mg(2+) is bound by residues D1013 and E1020.

In the N-terminal section; belongs to the LPG synthetase family. It in the C-terminal section; belongs to the class-II aminoacyl-tRNA synthetase family. The cofactor is Mg(2+).

It is found in the cell membrane. The catalysed reaction is tRNA(Lys) + L-lysine + ATP = L-lysyl-tRNA(Lys) + AMP + diphosphate. It catalyses the reaction L-lysyl-tRNA(Lys) + a 1,2-diacyl-sn-glycero-3-phospho-(1'-sn-glycerol) = a 1,2-diacyl-sn-glycero-3-phospho-1'-(3'-O-L-lysyl)-sn-glycerol + tRNA(Lys). Catalyzes the production of L-lysyl-tRNA(Lys)transfer and the transfer of a lysyl group from L-lysyl-tRNA(Lys) to membrane-bound phosphatidylglycerol (PG), which produces lysylphosphatidylglycerol (LPG), one of the components of the bacterial membrane with a positive net charge. LPG synthesis contributes to the resistance to cationic antimicrobial peptides (CAMPs) and likely protects M.tuberculosis against the CAMPs produced by competiting microorganisms (bacteriocins). In fact, the modification of anionic phosphatidylglycerol with positively charged L-lysine results in repulsion of the peptides. This Mycolicibacterium gilvum (strain PYR-GCK) (Mycobacterium gilvum (strain PYR-GCK)) protein is Lysylphosphatidylglycerol biosynthesis bifunctional protein LysX (lysX).